The chain runs to 363 residues: GDSL esterase/lipase At2g24560 (363 aa).

Residues 1 to 22 (MSTSKTITFTLFIAALLSSCDA) form the signal peptide. The N-linked (GlcNAc...) asparagine glycan is linked to Asn-25. Residue Ser-41 is the Nucleophile of the active site. Asn-103 and Asn-325 each carry an N-linked (GlcNAc...) asparagine glycan. Active-site residues include Asp-333 and His-336.

Belongs to the 'GDSL' lipolytic enzyme family.

It localises to the secreted. This chain is GDSL esterase/lipase At2g24560, found in Arabidopsis thaliana (Mouse-ear cress).